The chain runs to 203 residues: Inactive ribonuclease-like protein 9 (203 aa).

A signal peptide spans Met1 to Leu25. Intrachain disulfides connect Cys96–Cys151, Cys114–Cys166, and Cys121–Cys128. N-linked (GlcNAc...) asparagine glycans are attached at residues Asn129 and Asn141.

It belongs to the pancreatic ribonuclease family.

It localises to the secreted. Its function is as follows. Does not exhibit any ribonuclease activity. The sequence is that of Inactive ribonuclease-like protein 9 (RNASE9) from Macaca assamensis (Assam macaque).